A 229-amino-acid chain; its full sequence is Urease accessory protein UreG (229 aa).

The span at 1 to 15 shows a compositional bias: basic and acidic residues; the sequence is MPPHFIDGEPHDHQH. Residues 1–20 form a disordered region; the sequence is MPPHFIDGEPHDHQHDRPRR. 34–41 provides a ligand contact to GTP; sequence GPVGSGKT.

The protein belongs to the SIMIBI class G3E GTPase family. UreG subfamily. As to quaternary structure, homodimer. UreD, UreF and UreG form a complex that acts as a GTP-hydrolysis-dependent molecular chaperone, activating the urease apoprotein by helping to assemble the nickel containing metallocenter of UreC. The UreE protein probably delivers the nickel.

Its subcellular location is the cytoplasm. Its function is as follows. Facilitates the functional incorporation of the urease nickel metallocenter. This process requires GTP hydrolysis, probably effectuated by UreG. In Rhodococcus jostii (strain RHA1), this protein is Urease accessory protein UreG.